Reading from the N-terminus, the 323-residue chain is tRNA U34 carboxymethyltransferase (323 aa).

Residues K91, W105, K110, G130, 180–181, M196, Y200, and R315 each bind carboxy-S-adenosyl-L-methionine; that span reads IE.

Belongs to the class I-like SAM-binding methyltransferase superfamily. CmoB family. As to quaternary structure, homotetramer.

The catalysed reaction is carboxy-S-adenosyl-L-methionine + 5-hydroxyuridine(34) in tRNA = 5-carboxymethoxyuridine(34) in tRNA + S-adenosyl-L-homocysteine + H(+). Its function is as follows. Catalyzes carboxymethyl transfer from carboxy-S-adenosyl-L-methionine (Cx-SAM) to 5-hydroxyuridine (ho5U) to form 5-carboxymethoxyuridine (cmo5U) at position 34 in tRNAs. The polypeptide is tRNA U34 carboxymethyltransferase (Geobacter sp. (strain M21)).